Consider the following 975-residue polypeptide: MNRVIEIHAHYDQRQLSQSPNTNFLVHHPYLTLIPKFLLGALIVYAPYSFAEMELAISGHKQGKDRDTFTMISSCPEGTNYIINRKLILSDFSLLNKVSSGGAFRNLAGKISFLGKNSSASIHFKHININGFGAGVFSESSIEFTDLRKLVAFGSESTGGIFTAKEDISFKNNHHIAFRNNITKGNGGVIQLQGDMKGSVSFVDQRGAIIFTNNQAVTSSSMKHSGRGGAISGDFAGSRILFLNNQQITFEGNSAVHGGAIYNKNGLVEFLGNAGPLAFKENTTIANGGAIYTSNFKANQQTSPILFSQNHANKKGGAIYAQYVNLEQNQDTIRFEKNTAKEGGGAITSSQCSITAHNTIIFSDNAAGDLGGGAILLEGKKPSLTLIAHSGNIAFSGNTMLHITKKASLDRHNSILIKEAPYKIQLAANKNHSIHFFDPVMALSASSSPIQINAPEYETPFFSPKGMIVFSGANLLDDAREDVANRTSIFNQPVHLYNGTLSIENGAHLIVQSFKQTGGRISLSPGSSLALYTMNSFFHGNISSKEPLEINGLSFGVDISPSNLQAEIRAGNAPLRLSGSPSIHDPEGLFYENRDTAASPYQMEILLTSDKIVDISKFTTDSLVTNKQSGFQGAWHFSWQPNTINNTKQKILRASWLPTGEYVLESNRVGRAVPNSLWSTFLLLQTASHNLGDHLCNNRSLIPTSYFGVLIGGTGAEMSTHSSEEESFISRLGATGTSIIRLTPSLTLSGGGSHMFGDSFVADLPEHITSEGIVQNVGLTHVWGPLTVNSTLCAALDHNAMVRICSKKDHTYGKWDTFGMRGTLGASYTFLEYDQTMRVFSFANIEATNILQRAFTETGYNPRSFSKTKLLNIAIPIGIGYEFCLGNSSFALLGKGSIGYSRDIKRENPSTLAHLAMNDFAWTTNGCSVPTSAHTLANQLILRYKACSLYITAYTINREGKNLSNSLSCGGYVGF.

The first 51 residues, 1–51 (MNRVIEIHAHYDQRQLSQSPNTNFLVHHPYLTLIPKFLLGALIVYAPYSFA), serve as a signal peptide directing secretion. Residues 699-975 (RSLIPTSYFG…SLSCGGYVGF (277 aa)) form the Autotransporter domain.

The protein belongs to the PMP outer membrane protein family.

The protein resides in the secreted. The protein localises to the cell wall. It localises to the cell outer membrane. This Chlamydia trachomatis serovar D (strain ATCC VR-885 / DSM 19411 / UW-3/Cx) protein is Probable outer membrane protein PmpA (pmpA).